The following is a 121-amino-acid chain: Large ribosomal subunit protein uL24 (121 aa).

Belongs to the universal ribosomal protein uL24 family. As to quaternary structure, part of the 50S ribosomal subunit.

Its function is as follows. One of two assembly initiator proteins, it binds directly to the 5'-end of the 23S rRNA, where it nucleates assembly of the 50S subunit. In terms of biological role, located at the polypeptide exit tunnel on the outside of the subunit. In Methanocorpusculum labreanum (strain ATCC 43576 / DSM 4855 / Z), this protein is Large ribosomal subunit protein uL24.